A 215-amino-acid chain; its full sequence is MEKKVLLTGFDPFGGETVNPSWEAVKRLNGAAEGPASIVSEQVPTVFYKSLAVLREAIKKHQPDIIICVGQAGGRMQITPERVAINLNEARIPDNEGNQPVGEDISQGGPAAYWTGLPIKRIVEEIKKEGIPAAVSYTAGTFVCNHLFYGLMDEISRHHPHIRGGFIHIPYIPEQTLQKSAPSLSLDHITKALKIAAVTAAVHEDDIETGGGELH.

Catalysis depends on residues glutamate 81, cysteine 144, and histidine 168.

This sequence belongs to the peptidase C15 family. Homotetramer.

Its subcellular location is the cytoplasm. The enzyme catalyses Release of an N-terminal pyroglutamyl group from a polypeptide, the second amino acid generally not being Pro.. In terms of biological role, removes 5-oxoproline from various penultimate amino acid residues except L-proline. This Bacillus amyloliquefaciens (Bacillus velezensis) protein is Pyrrolidone-carboxylate peptidase (pcp).